A 373-amino-acid chain; its full sequence is Erythronate-4-phosphate dehydrogenase (373 aa).

The substrate site is built by Ser-45 and Thr-66. 2 residues coordinate NAD(+): Asp-146 and Thr-175. Arg-208 is a catalytic residue. Asp-232 lines the NAD(+) pocket. The active site involves Glu-237. Residue His-254 is the Proton donor of the active site. Residue Gly-257 participates in NAD(+) binding. Tyr-258 serves as a coordination point for substrate.

It belongs to the D-isomer specific 2-hydroxyacid dehydrogenase family. PdxB subfamily. In terms of assembly, homodimer.

Its subcellular location is the cytoplasm. The enzyme catalyses 4-phospho-D-erythronate + NAD(+) = (R)-3-hydroxy-2-oxo-4-phosphooxybutanoate + NADH + H(+). Its pathway is cofactor biosynthesis; pyridoxine 5'-phosphate biosynthesis; pyridoxine 5'-phosphate from D-erythrose 4-phosphate: step 2/5. Its function is as follows. Catalyzes the oxidation of erythronate-4-phosphate to 3-hydroxy-2-oxo-4-phosphonooxybutanoate. The polypeptide is Erythronate-4-phosphate dehydrogenase (Serratia proteamaculans (strain 568)).